The following is a 738-amino-acid chain: Coiled-coil domain-containing protein 142 (738 aa).

The disordered stretch occupies residues 1-34; that stretch reads MARASSSSGPLPPLANVPSSWAQPVGAGEERDEG. A coiled-coil region spans residues 69–92; that stretch reads ALQRLRATLLRLHREREQLLRARD. The tract at residues 682–704 is disordered; that stretch reads LSTLGGGGRGGGGGGGPGPSPEA. A compositionally biased stretch (gly residues) spans 685 to 698; the sequence is LGGGGRGGGGGGGP.

The chain is Coiled-coil domain-containing protein 142 (Ccdc142) from Mus musculus (Mouse).